We begin with the raw amino-acid sequence, 120 residues long: UPF0102 protein PTH_1707 (120 aa).

The protein belongs to the UPF0102 family.

This Pelotomaculum thermopropionicum (strain DSM 13744 / JCM 10971 / SI) protein is UPF0102 protein PTH_1707.